The following is a 25-amino-acid chain: Pancreatic triacylglycerol lipase (25 aa).

Cys-4 and Cys-10 are joined by a disulfide.

Belongs to the AB hydrolase superfamily. Lipase family. As to quaternary structure, forms a 1:1 stoichiometric complex with (pro)colipase/CLPS.

It is found in the secreted. It catalyses the reaction a triacylglycerol + H2O = a diacylglycerol + a fatty acid + H(+). The enzyme catalyses 1,2,3-tributanoylglycerol + H2O = dibutanoylglycerol + butanoate + H(+). The catalysed reaction is 1,2,3-tri-(9Z-octadecenoyl)-glycerol + H2O = di-(9Z)-octadecenoylglycerol + (9Z)-octadecenoate + H(+). It carries out the reaction all-trans-retinyl hexadecanoate + H2O = all-trans-retinol + hexadecanoate + H(+). It catalyses the reaction 1,2-di-(9Z-octadecenoyl)-glycerol + H2O = (9Z-octadecenoyl)-glycerol + (9Z)-octadecenoate + H(+). With respect to regulation, inhibited by bile salts, is reactivated by (pro)colipase/CLPS. Its function is as follows. Plays an important role in fat metabolism. It preferentially splits the esters of long-chain fatty acids at positions 1 and 3, producing mainly 2-monoacylglycerol and free fatty acids, and shows considerably higher activity against insoluble emulsified substrates than against soluble ones. This chain is Pancreatic triacylglycerol lipase (PNLIP), found in Felis catus (Cat).